Consider the following 426-residue polypeptide: Selenocysteine lyase (426 aa).

Lysine 239 is subject to N6-(pyridoxal phosphate)lysine. The active-site S-selanylcysteine intermediate is cysteine 367.

This sequence belongs to the class-V pyridoxal-phosphate-dependent aminotransferase family. In terms of assembly, homodimer. Requires pyridoxal 5'-phosphate as cofactor.

The protein resides in the cytoplasm. It localises to the cytosol. It catalyses the reaction L-selenocysteine + AH2 = hydrogenselenide + L-alanine + A + H(+). Functionally, catalyzes the decomposition of L-selenocysteine to L-alanine and elemental selenium. The polypeptide is Selenocysteine lyase (scly) (Xenopus laevis (African clawed frog)).